A 208-amino-acid polypeptide reads, in one-letter code: RNA chaperone ProQ (208 aa).

Residues 106–127 are compositionally biased toward basic and acidic residues; it reads SKAKVATRRKEQAKKAREEAKA. The tract at residues 106–154 is disordered; it reads SKAKVATRRKEQAKKAREEAKAKKTARAATPPKRRPQPAAKKVEQPVET.

It belongs to the ProQ family.

The protein localises to the cytoplasm. In terms of biological role, RNA chaperone with significant RNA binding, RNA strand exchange and RNA duplexing activities. The polypeptide is RNA chaperone ProQ (Aliivibrio fischeri (strain ATCC 700601 / ES114) (Vibrio fischeri)).